The chain runs to 293 residues: Magnetosome protein MamB (293 aa).

Topologically, residues 1-12 (MTTAACRKCRDE) are cytoplasmic. Positions 1-214 (MTTAACRKCR…GLMDTSVEND (214 aa)) are transmembrane domain (TMD). The helical transmembrane segment at 13 to 33 (VIWWAFFINIGQTTYKGVLGV) threads the bilayer. Residues 34–78 (LSGSAALVADAMHSGADVVATLVTMFSVKVSDKKADEKYPFGYGN) are Lumenal-facing. The helical transmembrane segment at 79 to 99 (IQFIASSIVGLILFFGALYLM) threads the bilayer. Residues 100-105 (YESTMQ) lie on the Cytoplasmic side of the membrane. A helical transmembrane segment spans residues 106–126 (IIAGNTSSPSPFAVLGAIVSI). Over 127 to 158 (ATNELMFRYQSCVGRQNNSPAIIANAWDNRSD) the chain is Lumenal. Residues 159 to 179 (ALSSVAVLIGIVAAVVGFPIA) traverse the membrane as a helical segment. Residues 180–293 (DRLAAIGVGI…VGVTPVRIAA (114 aa)) are Cytoplasmic-facing. The tract at residues 215–293 (VLVDAYNIAK…VGVTPVRIAA (79 aa)) is C-terminal domain (CTD). Residues H245, D247, and H283 each contribute to the Zn(2+) site.

The protein belongs to the cation diffusion facilitator (CDF) transporter (TC 2.A.4) family. As to quaternary structure, the isolated C-terminal domain (approximately 213-293) forms homodimers. Forms heterodimers with MamM.

The protein localises to the magnetosome membrane. Functionally, plays a dual, essential role in magnetosome formation; required for magnetosome vesicle formation as well as biomineralization. Probably binds and transports iron. Requires heterodimerization with MamM for stability. This Magnetospira sp. (strain QH-2) (Marine magnetic spirillum (strain QH-2)) protein is Magnetosome protein MamB (mamB).